Reading from the N-terminus, the 264-residue chain is Thymidylate synthase (264 aa).

DUMP-binding positions include arginine 21 and 126–127 (RR). Cysteine 146 functions as the Nucleophile in the catalytic mechanism. Residues 166-169 (RSAD), asparagine 177, and 207-209 (HLY) each bind dUMP. Aspartate 169 contacts (6R)-5,10-methylene-5,6,7,8-tetrahydrofolate. Alanine 263 contributes to the (6R)-5,10-methylene-5,6,7,8-tetrahydrofolate binding site.

The protein belongs to the thymidylate synthase family. Bacterial-type ThyA subfamily. As to quaternary structure, homodimer.

The protein localises to the cytoplasm. The catalysed reaction is dUMP + (6R)-5,10-methylene-5,6,7,8-tetrahydrofolate = 7,8-dihydrofolate + dTMP. It participates in pyrimidine metabolism; dTTP biosynthesis. Its function is as follows. Catalyzes the reductive methylation of 2'-deoxyuridine-5'-monophosphate (dUMP) to 2'-deoxythymidine-5'-monophosphate (dTMP) while utilizing 5,10-methylenetetrahydrofolate (mTHF) as the methyl donor and reductant in the reaction, yielding dihydrofolate (DHF) as a by-product. This enzymatic reaction provides an intracellular de novo source of dTMP, an essential precursor for DNA biosynthesis. The chain is Thymidylate synthase from Bradyrhizobium sp. (strain ORS 278).